Consider the following 156-residue polypeptide: Small ribosomal subunit protein uS7 (156 aa).

It belongs to the universal ribosomal protein uS7 family. Part of the 30S ribosomal subunit. Contacts proteins S9 and S11.

Functionally, one of the primary rRNA binding proteins, it binds directly to 16S rRNA where it nucleates assembly of the head domain of the 30S subunit. Is located at the subunit interface close to the decoding center, probably blocks exit of the E-site tRNA. The polypeptide is Small ribosomal subunit protein uS7 (Nitrosococcus oceani (strain ATCC 19707 / BCRC 17464 / JCM 30415 / NCIMB 11848 / C-107)).